Reading from the N-terminus, the 310-residue chain is MSKPRKPKGRPISGWLILDKPMDFGSTEAVSKLKWLYKAQKAGHAGTLDPLASGMLPIALGDATKTVPYVMDGRKIYEFTVSWGEERATDDLEGDVTQSSERRPTEQQIRDILPRYIGTISQVPPQFSAIKIAGERAYDLARDGEAVEIPSREVEIFRLTLLGCRDANTAHFEVECGKGTYVRALARDFGRELGCYGHISGLRRTFVAPFSEDAMVPLANLVALEAIEDMDERLAALDALLIDTCEALSALPHLVINDDQAHRLKMGNPILVRGRDAPIAESEAYATARGRLIAIGEIGQGEFRPKRVFA.

Asp-49 serves as the catalytic Nucleophile.

This sequence belongs to the pseudouridine synthase TruB family. Type 1 subfamily.

It carries out the reaction uridine(55) in tRNA = pseudouridine(55) in tRNA. In terms of biological role, responsible for synthesis of pseudouridine from uracil-55 in the psi GC loop of transfer RNAs. The protein is tRNA pseudouridine synthase B of Rhizobium etli (strain ATCC 51251 / DSM 11541 / JCM 21823 / NBRC 15573 / CFN 42).